The sequence spans 300 residues: Bifunctional protein FolD 2 (300 aa).

Residues 165–167 (GRS), S190, and I231 each bind NADP(+).

It belongs to the tetrahydrofolate dehydrogenase/cyclohydrolase family. Homodimer.

It carries out the reaction (6R)-5,10-methylene-5,6,7,8-tetrahydrofolate + NADP(+) = (6R)-5,10-methenyltetrahydrofolate + NADPH. The enzyme catalyses (6R)-5,10-methenyltetrahydrofolate + H2O = (6R)-10-formyltetrahydrofolate + H(+). Its pathway is one-carbon metabolism; tetrahydrofolate interconversion. Its function is as follows. Catalyzes the oxidation of 5,10-methylenetetrahydrofolate to 5,10-methenyltetrahydrofolate and then the hydrolysis of 5,10-methenyltetrahydrofolate to 10-formyltetrahydrofolate. The sequence is that of Bifunctional protein FolD 2 from Pseudomonas syringae pv. syringae (strain B728a).